The following is a 173-amino-acid chain: Endoribonuclease YbeY (173 aa).

Residues His-126, His-130, and His-136 each coordinate Zn(2+).

The protein belongs to the endoribonuclease YbeY family. The cofactor is Zn(2+).

It is found in the cytoplasm. Single strand-specific metallo-endoribonuclease involved in late-stage 70S ribosome quality control and in maturation of the 3' terminus of the 16S rRNA. The protein is Endoribonuclease YbeY of Sinorhizobium fredii (strain NBRC 101917 / NGR234).